Consider the following 285-residue polypeptide: Acetylglutamate kinase (285 aa).

Residues 64-65 (GG), arginine 86, and asparagine 179 each bind substrate.

Belongs to the acetylglutamate kinase family. ArgB subfamily.

Its subcellular location is the plastid. The protein resides in the chloroplast. It carries out the reaction N-acetyl-L-glutamate + ATP = N-acetyl-L-glutamyl 5-phosphate + ADP. It functions in the pathway amino-acid biosynthesis; L-arginine biosynthesis; N(2)-acetyl-L-ornithine from L-glutamate: step 2/4. In terms of biological role, catalyzes the ATP-dependent phosphorylation of N-acetyl-L-glutamate. The chain is Acetylglutamate kinase from Pyropia yezoensis (Susabi-nori).